Consider the following 347-residue polypeptide: Cell shape-determining protein MreB (347 aa).

Residues 19–21 (TAN), 168–170 (GGT), 216–219 (ERIK), and 296–299 (GGAL) each bind ATP.

The protein belongs to the FtsA/MreB family. In terms of assembly, forms polymers.

Its subcellular location is the cytoplasm. Its function is as follows. Forms membrane-associated dynamic filaments that are essential for cell shape determination. Acts by regulating cell wall synthesis and cell elongation, and thus cell shape. A feedback loop between cell geometry and MreB localization may maintain elongated cell shape by targeting cell wall growth to regions of negative cell wall curvature. The chain is Cell shape-determining protein MreB from Escherichia coli O6:H1 (strain CFT073 / ATCC 700928 / UPEC).